Here is a 384-residue protein sequence, read N- to C-terminus: GTPase Obg (384 aa).

The region spanning 1–159 is the Obg domain; that stretch reads MKFIDEAKIE…RSLQLELKVL (159 aa). The segment at 20 to 46 is disordered; it reads ATSFRREKFVPRGGPDGGDGGKGGSVW. Positions 33 to 43 are enriched in gly residues; sequence GPDGGDGGKGG. Positions 160 to 348 constitute an OBG-type G domain; the sequence is ADVGLLGMPN…LVHQINQYLT (189 aa). GTP contacts are provided by residues 166–173, 191–195, 213–216, 284–287, and 329–331; these read GMPNAGKS, FTTLH, DIPG, NKLD, and SAL. 2 residues coordinate Mg(2+): S173 and T193.

The protein belongs to the TRAFAC class OBG-HflX-like GTPase superfamily. OBG GTPase family. Monomer. Mg(2+) is required as a cofactor.

The protein localises to the cytoplasm. In terms of biological role, an essential GTPase which binds GTP, GDP and possibly (p)ppGpp with moderate affinity, with high nucleotide exchange rates and a fairly low GTP hydrolysis rate. Plays a role in control of the cell cycle, stress response, ribosome biogenesis and in those bacteria that undergo differentiation, in morphogenesis control. This Neisseria meningitidis serogroup C / serotype 2a (strain ATCC 700532 / DSM 15464 / FAM18) protein is GTPase Obg.